Here is a 232-residue protein sequence, read N- to C-terminus: Syntaxin-51 (232 aa).

The Cytoplasmic segment spans residues 1–208; that stretch reads MASSSDSWMR…NKNMRSGCSC (208 aa). The 63-residue stretch at 136–198 folds into the t-SNARE coiled-coil homology domain; that stretch reads RQVMREQDEG…RRVQKSLAVM (63 aa). The helical; Anchor for type IV membrane protein transmembrane segment at 209-229 threads the bilayer; the sequence is MSMLLSVLGIVGLAVVIWMLV. The Vesicular segment spans residues 230 to 232; the sequence is KYM.

The protein belongs to the syntaxin family. As to quaternary structure, interacts with VTI11 and either SYP21, or SYP22, or SYP61 in the prevacuolar compartment, or with VTI12 and SYP61 in the trans-Golgi network to form t-SNARE complexes. In terms of tissue distribution, expressed in root, leaf, stem, flower and silique.

Its subcellular location is the golgi apparatus. The protein localises to the trans-Golgi network membrane. It localises to the prevacuolar compartment membrane. Functionally, vesicle trafficking protein that functions in the secretory pathway. The sequence is that of Syntaxin-51 (SYP51) from Arabidopsis thaliana (Mouse-ear cress).